A 298-amino-acid polypeptide reads, in one-letter code: MSAQNSLFSGSIVALVTPMNHYGEVDFSCLEKLVEHHIEAGSNALVSVGTTGESATLSIEENVKVIEKTVEFAKGRIPIIAGAGANATSEAITMTKLLRDSGVAGCLSVVPYYNKPTQEGIYQHFKAIAECTNLPQILYNVPSRTGSDMKPETVARLAEIENIVGIKEATGDVSRIVKIKQLAGKNFIVLSGDDATGLEAIKLGAEGVISVTNNIAAKDMADMYRYALVGDFDKAEEINARLMRLHHDLFIESNPIPVKWAAYRLGLIKSSHLRLPLTTLSEEIQPKVEDALKIAGLL.

T51 provides a ligand contact to pyruvate. Residue Y139 is the Proton donor/acceptor of the active site. K167 functions as the Schiff-base intermediate with substrate in the catalytic mechanism. I209 serves as a coordination point for pyruvate.

It belongs to the DapA family. In terms of assembly, homotetramer; dimer of dimers.

The protein resides in the cytoplasm. It catalyses the reaction L-aspartate 4-semialdehyde + pyruvate = (2S,4S)-4-hydroxy-2,3,4,5-tetrahydrodipicolinate + H2O + H(+). Its pathway is amino-acid biosynthesis; L-lysine biosynthesis via DAP pathway; (S)-tetrahydrodipicolinate from L-aspartate: step 3/4. In terms of biological role, catalyzes the condensation of (S)-aspartate-beta-semialdehyde [(S)-ASA] and pyruvate to 4-hydroxy-tetrahydrodipicolinate (HTPA). In Haemophilus influenzae (strain PittGG), this protein is 4-hydroxy-tetrahydrodipicolinate synthase.